Here is a 384-residue protein sequence, read N- to C-terminus: Toluene efflux pump periplasmic linker protein TtgA (384 aa).

A signal peptide spans 1 to 22 (MQFKPAVTALVSAVALATLLSG). C23 is lipidated: N-palmitoyl cysteine. C23 carries the S-diacylglycerol cysteine lipid modification. Residues 115 to 155 (LAERYKQLIDEQAVSKQEYDDANAKRLQAEASLKSAQIDLR) adopt a coiled-coil conformation. Residues 362–384 (ATNVKKPAGPDQANAAKADAKAE) are disordered. Positions 368 to 378 (PAGPDQANAAK) are enriched in low complexity.

The protein belongs to the membrane fusion protein (MFP) (TC 8.A.1) family.

The protein resides in the cell inner membrane. In terms of biological role, the periplasmic linker protein component of a constitutive organic solvent efflux system. Involved in export of toluene, styrene, m-xylene, propylbenzene and ethylbenzene. Also exports AMP and the antibiotics carbenicillin, nalidixic acid, chloramphenicol and tetracycline. The polypeptide is Toluene efflux pump periplasmic linker protein TtgA (ttgA) (Pseudomonas putida (strain DOT-T1E)).